Reading from the N-terminus, the 103-residue chain is Methanol dehydrogenase [cytochrome c] subunit 2 (103 aa).

Positions methionine 1–alanine 20 are cleaved as a signal peptide. Cysteine 26 and cysteine 32 are disulfide-bonded.

The protein belongs to the methanol dehydrogenase subunit 2 family. In terms of assembly, heterotetramer composed of 2 alpha and 2 beta subunits.

The protein resides in the periplasm. It catalyses the reaction 2 Fe(III)-[cytochrome cL] + a primary alcohol = 2 Fe(II)-[cytochrome cL] + an aldehyde + 2 H(+). In terms of biological role, catalyzes the oxidation of primary alcohols including methanol. This is Methanol dehydrogenase [cytochrome c] subunit 2 (moxI) from Paracoccus denitrificans.